The following is a 99-amino-acid chain: Small ribosomal subunit protein uS19 (99 aa).

The segment at 77-99 is disordered; the sequence is TRTFHGHSGDKKAKVAKGGPGGR.

This sequence belongs to the universal ribosomal protein uS19 family.

Its function is as follows. Protein S19 forms a complex with S13 that binds strongly to the 16S ribosomal RNA. This is Small ribosomal subunit protein uS19 from Sorangium cellulosum (strain So ce56) (Polyangium cellulosum (strain So ce56)).